The primary structure comprises 270 residues: Cbp/p300-interacting transactivator 2 (270 aa).

Positions 138–201 (LHPAAGHQMN…SGGGSGSGNM (64 aa)) are disordered. Residues 165–198 (STPGGSGGSSTPGGSGSSSGGGAGSSNSGGGSGS) are compositionally biased toward gly residues.

It belongs to the CITED family. In terms of assembly, interacts (via C-terminus) with SMAD2. Interacts (via C-terminus) with SMAD3 (via MH2 domain). Interacts with LHX2 (via LIM domains). Interacts with WT1. Interacts (via C-terminus) with EP300 (via CH1 domain); the interaction is stimulated in response to hypoxia. Interacts with PPARA. Interacts (via C-terminus) with TFAP2A, TFAP2B and TFAP2C.

It is found in the nucleus. Transcriptional coactivator of the p300/CBP-mediated transcription complex. Acts as a bridge, linking TFAP2 transcription factors and the p300/CBP transcriptional coactivator complex in order to stimulate TFAP2-mediated transcriptional activation. Positively regulates TGF-beta signaling through its association with the SMAD/p300/CBP-mediated transcriptional coactivator complex. Stimulates the peroxisome proliferator-activated receptors PPARA transcriptional activity. Enhances estrogen-dependent transactivation mediated by estrogen receptors. Also acts as a transcriptional corepressor; interferes with the binding of the transcription factors HIF1A or STAT2 and the p300/CBP transcriptional coactivator complex. Participates in sex determination and early gonad development by stimulating transcription activation of SRY. Plays a role in controlling left-right patterning during embryogenesis; potentiates transcriptional activation of NODAL-mediated gene transcription in the left lateral plate mesoderm (LPM). Plays an essential role in differentiation of the adrenal cortex from the adrenogonadal primordium (AGP); stimulates WT1-mediated transcription activation thereby up-regulating the nuclear hormone receptor NR5A1 promoter activity. Associates with chromatin to the PITX2 P1 promoter region. The polypeptide is Cbp/p300-interacting transactivator 2 (CITED2) (Homo sapiens (Human)).